Consider the following 997-residue polypeptide: MDSTDDDFGDLYVDDAKFQATDAFESECATNSGEDKGFEETVKSDSEGEVKKFDVVAKDSSPCDDDDCAMNLTEADEESEFSDSDDDLNIVLKDDDSKALPASCVFNTNFGGYEASKASSFQRRWTRNASANNACIDPSLGMSQYRYSFPNPWSRTPFDVNLDVLEKKPWRDPGTDTSDFFNFGLNEQSWKDYCKPLGRAIEVRGGTLERIPSADLRRPRDPDPGVVIQIPVTNDVEELPVRTPEKARCITSNEASRSDVSHSYGSKDLNSVYGSPKDEAFVGCQEENAGSFSGEKSLPTENCCSREATPSDKEMLEKEKEESVCNSDETDPSSVERESSLGDRIRLSPTSSSSVGINEESDDYETESLKDSATDDQREVSTPPQEARLAEHEAISIKRGEDSGTMHSRHRRSHEDSSKRHCGRAGYARYVKDASPTPDPGRGKKVGSLQGLYRDSNKNWQNGPPITLERDETEGKGVHYYREKSHGRLNSSVDHDRHREHRFGWRNNKESSLGRGFDHSNSYKCGTHLKEYTSRSSFDLNQRNSRSSFKEEDDRYGWHHRERKYVHERSPIRAYENYKERNGCDWLREPYYEDCIPITDMDYRYRSENSSAHAIHNLKHSPENDLYCRRRGGYDYNLHRDRYEDGVHRVESRIPFELAYREMRSFAEVEMREYQGYKRHEEFSEIEKRHHYIHDWHLDRFVSEEDGYKYRIQDGWSSPSLSLRDSWYTKEAKGDFRRDDTRDFRTPEAYDSQNNHFHKAAPRDGWTQNLGRSHNVSVKDRLQYDADWVGPDRGRYNMADDMQCSMREVSNSEHPSYTDEIFVRDIRVPTHNRMATKQRFGYLQSHIHENDERHHRSKKLRGDGHAFIKRQDHVDLAGRQGKVSNQSKKRFSNGGDTIEQQDVQKPRKLMGKSEEKAMQNRDINDKEEGEIIEEVKGVEIDNERIQESLKKMEKRRERFKGTKLAVEATFKSQTELRAKADVTNQQRPVRKRRWCAS.

Disordered stretches follow at residues 250 to 272 (ITSN…LNSV), 289 to 475 (AGSF…ETEG), 534 to 553 (SRSS…KEED), and 880 to 900 (QGKV…TIEQ). The segment covering 261-272 (SHSYGSKDLNSV) has biased composition (polar residues). Composition is skewed to basic and acidic residues over residues 309–323 (TPSD…KEES), 334–346 (SVER…DRIR), 367–379 (ESLK…DQRE), and 388–404 (RLAE…EDSG). A Nuclear localization signal motif is present at residues 397–404 (IKRGEDSG). A compositionally biased stretch (polar residues) spans 534 to 547 (SRSSFDLNQRNSRS). Residues 930 to 963 (EIIEEVKGVEIDNERIQESLKKMEKRRERFKGTK) adopt a coiled-coil conformation.

The protein belongs to the FIP1 family. As to quaternary structure, component of the cleavage and polyadenylation specificity factor (CPSF) complex. Forms a complex with cleavage and polyadenylation specificity factor (CPSF) subunits CLPS5, FIPS5, PAPS4, PCFS1, CSTF64 and CPSF30.

Its subcellular location is the nucleus. In terms of biological role, component of the cleavage and polyadenylation specificity factor (CPSF) complex that plays a key role in pre-mRNA 3'-end formation, recognizing the AAUAAA signal sequence and interacting with poly(A) polymerase and other factors to bring about cleavage and poly(A) addition. FIP1L1 contributes to poly(A) site recognition and stimulates poly(A) addition. Binds to U-rich RNA sequence elements surrounding the poly(A) site. May act to tether poly(A) polymerase to the CPSF complex. The chain is FIP1[III]-like protein from Arabidopsis thaliana (Mouse-ear cress).